A 391-amino-acid chain; its full sequence is 3-ketoacyl-CoA thiolase (391 aa).

Residue C95 is the Acyl-thioester intermediate of the active site. Active-site proton acceptor residues include H347 and C377.

It belongs to the thiolase-like superfamily. Thiolase family. In terms of assembly, heterotetramer of two alpha chains (FadB) and two beta chains (FadA).

The protein localises to the cytoplasm. The catalysed reaction is an acyl-CoA + acetyl-CoA = a 3-oxoacyl-CoA + CoA. It functions in the pathway lipid metabolism; fatty acid beta-oxidation. In terms of biological role, catalyzes the final step of fatty acid oxidation in which acetyl-CoA is released and the CoA ester of a fatty acid two carbons shorter is formed. This is 3-ketoacyl-CoA thiolase from Pseudomonas fluorescens (strain Pf0-1).